A 413-amino-acid chain; its full sequence is MSRNLIVGLDVGTSKICTVVAEVNLNDQLEIVGIGTSISRGVRKGVLINIEAALDSISNSIEAAELISGCDITSLSVSMSGSSVEGTNSRGVVAINSKTREINEEDVERVIEAAKAIVIPMDREILHVIPQEFIVDGIPHIKNPIDMMGIRLEGEVHIITGSSSSSQNLVRCVNRAGFAVDEVVLGSLASSYATLSKEEREMGVLFIDMGKGTTDIILYIDGSPYYTGVIPIGVNRVTLDIAQVWKVPEDVAENIKITAGIAHPSILESQMETVIIPNLGTRPPQEKSRKELSVIINSRLREIFEMMKAEILKRGLYNKINGGIVLTGGGALFPGISNLIEEVFNYPARIGLPMSINGIGEEHIDPKFSSALGLVLYKHEQQKFNKLKKVSSKVKRKNKISSKLKGWFLKEWF.

Belongs to the FtsA/MreB family. Self-interacts. Interacts with FtsZ.

The protein resides in the cell inner membrane. Cell division protein that is involved in the assembly of the Z ring. May serve as a membrane anchor for the Z ring. This is Cell division protein FtsA from Borreliella burgdorferi (strain ATCC 35210 / DSM 4680 / CIP 102532 / B31) (Borrelia burgdorferi).